Here is a 602-residue protein sequence, read N- to C-terminus: Exo-poly-alpha-D-galacturonosidase (602 aa).

An N-terminal signal peptide occupies residues 1–27 (MKVITFSRRSALASIVATCLMSTPALA). In terms of domain architecture, Fibronectin type-III spans 32 to 149 (APQKLQIPTL…TVTTTTTAVP (118 aa)). The active-site Proton donor is Asp-395. The active site involves His-428.

Belongs to the glycosyl hydrolase 28 family.

It localises to the secreted. It carries out the reaction [(1-&gt;4)-alpha-D-galacturonosyl](n) + H2O = alpha-D-galacturonosyl-(1-&gt;4)-D-galacturonate + [(1-&gt;4)-alpha-D-galacturonosyl](n-2). Contributes significantly to bacterial utilization of polygalacturonate and the induction of pectate lyase in the presence of extracellular pectic polymers. The polypeptide is Exo-poly-alpha-D-galacturonosidase (pehX) (Dickeya chrysanthemi (Pectobacterium chrysanthemi)).